The following is a 442-amino-acid chain: Hydrolase phmG (442 aa).

Residue serine 259 is the Nucleophile of the active site.

It belongs to the AB hydrolase superfamily. FUS2 hydrolase family. In terms of assembly, homodimer.

It participates in mycotoxin biosynthesis. Its function is as follows. Hydrolyase; part of the gene cluster that mediates the biosynthesis of the mycotoxins phomacins, leucine-derived cytochalasans with potent actin polymerization-inhibitory activities and monocot-specific antigerminative activities. The first step in the pathway is catalyzed by the hybrid PKS-NRPS phmA, assisted by the enoyl reductase phmE, that are responsible for fusion of the leucine precursor and the polyketide backbone to produce a 2-pyrrolidone intermediate. The polyketide synthase module (PKS) of phmA is responsible for the synthesis of the polyketide backbone and the downstream nonribosomal peptide synthetase (NRPS) amidates the carboxyl end of the polyketide with the leucine precursor. Because phmA lacks a designated enoylreductase (ER) domain, the required activity is provided the enoyl reductase phmE. Reduction by the hydrolyase phmG, followed by dehydration and intra-molecular Diels-Alder cyclization by the Diels-Alderase phmD then yield the required isoindolone-fused macrocycle. A number of oxidative steps catalyzed by the tailoring cytochrome P450 monooxygenase phmB, the FAD-linked oxidoreductase phmC and the short-chain dehydrogenase/reductase phmF, are further required to afford the final products, phomacin D and phomacin E. This chain is Hydrolase phmG, found in Phaeosphaeria nodorum (strain SN15 / ATCC MYA-4574 / FGSC 10173) (Glume blotch fungus).